A 472-amino-acid chain; its full sequence is UDP-glucosyltransferase 103 (472 aa).

The Proton acceptor role is filled by H15. H15 provides a ligand contact to an anthocyanidin. Catalysis depends on D117, which acts as the Charge relay. UDP-alpha-D-glucose-binding residues include A344, Q346, H361, W364, N365, S366, and E369. G384 lines the an anthocyanidin pocket. UDP-alpha-D-glucose-binding residues include E385 and Q386.

This sequence belongs to the UDP-glycosyltransferase family.

The enzyme catalyses (20S)-ginsenoside F1 + UDP-alpha-D-glucose = (20S)-ginsenoside Rg1 + UDP + H(+). It participates in secondary metabolite biosynthesis; terpenoid biosynthesis. Its function is as follows. Probable component of the triterpene saponins (e.g. ginsenosides) biosynthetic pathway. No detectable activity toward protopanaxatriol (PPT). The protein is UDP-glucosyltransferase 103 of Panax ginseng (Korean ginseng).